The chain runs to 404 residues: Metacaspase-1 (404 aa).

Positions 1–97 (MHHHHQQPSY…NPQAFGHGAP (97 aa)) are disordered. Active-site residues include His195 and Cys251.

Belongs to the peptidase C14B family.

Functionally, involved in cell death (apoptosis). This is Metacaspase-1 (casA) from Emericella nidulans (strain FGSC A4 / ATCC 38163 / CBS 112.46 / NRRL 194 / M139) (Aspergillus nidulans).